Consider the following 214-residue polypeptide: Potassium/proton antiporter CemA (214 aa).

2 helical membrane-spanning segments follow: residues 92–112 and 174–194; these read ILHL…SILG and IISG…KYWI.

The protein belongs to the CemA family.

It is found in the plastid. The protein localises to the chloroplast inner membrane. The catalysed reaction is K(+)(in) + H(+)(out) = K(+)(out) + H(+)(in). Its function is as follows. Contributes to K(+)/H(+) antiport activity by supporting proton efflux to control proton extrusion and homeostasis in chloroplasts in a light-dependent manner to modulate photosynthesis. Prevents excessive induction of non-photochemical quenching (NPQ) under continuous-light conditions. Indirectly promotes efficient inorganic carbon uptake into chloroplasts. The sequence is that of Potassium/proton antiporter CemA from Oenothera argillicola (Appalachian evening primrose).